A 334-amino-acid chain; its full sequence is Probable N5-carboxyaminoimidazole ribonucleotide mutase (334 aa).

Residues Ser11, Asp14, and Arg41 each contribute to the substrate site.

The protein belongs to the AIR carboxylase family. Class I subfamily.

It catalyses the reaction 5-carboxyamino-1-(5-phospho-D-ribosyl)imidazole + H(+) = 5-amino-1-(5-phospho-D-ribosyl)imidazole-4-carboxylate. It participates in purine metabolism; IMP biosynthesis via de novo pathway; 5-amino-1-(5-phospho-D-ribosyl)imidazole-4-carboxylate from 5-amino-1-(5-phospho-D-ribosyl)imidazole (N5-CAIR route): step 2/2. In terms of biological role, catalyzes the conversion of N5-carboxyaminoimidazole ribonucleotide (N5-CAIR) to 4-carboxy-5-aminoimidazole ribonucleotide (CAIR). The sequence is that of Probable N5-carboxyaminoimidazole ribonucleotide mutase from Methanothermobacter thermautotrophicus (strain ATCC 29096 / DSM 1053 / JCM 10044 / NBRC 100330 / Delta H) (Methanobacterium thermoautotrophicum).